A 167-amino-acid polypeptide reads, in one-letter code: Ribosome maturation factor RimP (167 aa).

Belongs to the RimP family.

Its subcellular location is the cytoplasm. In terms of biological role, required for maturation of 30S ribosomal subunits. The polypeptide is Ribosome maturation factor RimP (Streptomyces griseus subsp. griseus (strain JCM 4626 / CBS 651.72 / NBRC 13350 / KCC S-0626 / ISP 5235)).